Here is a 95-residue protein sequence, read N- to C-terminus: uncharacterized protein (95 aa).

This is an uncharacterized protein from Saccharomyces cerevisiae (strain ATCC 204508 / S288c) (Baker's yeast).